Reading from the N-terminus, the 324-residue chain is tRNA N6-adenosine threonylcarbamoyltransferase (324 aa).

The Fe cation site is built by H107, H111, and Y127. Substrate contacts are provided by residues 127–131 (YVSGG), D159, G172, E176, and N257. D285 contacts Fe cation.

The protein belongs to the KAE1 / TsaD family. Monomer. Component of the KEOPS complex that consists of Kae1, Bud32, Cgi121 and Pcc1; the whole complex dimerizes. The cofactor is Fe(2+).

Its subcellular location is the cytoplasm. The catalysed reaction is L-threonylcarbamoyladenylate + adenosine(37) in tRNA = N(6)-L-threonylcarbamoyladenosine(37) in tRNA + AMP + H(+). In terms of biological role, required for the formation of a threonylcarbamoyl group on adenosine at position 37 (t(6)A37) in tRNAs that read codons beginning with adenine. Is a component of the KEOPS complex that is probably involved in the transfer of the threonylcarbamoyl moiety of threonylcarbamoyl-AMP (TC-AMP) to the N6 group of A37. Kae1 likely plays a direct catalytic role in this reaction, but requires other protein(s) of the complex to fulfill this activity. This chain is tRNA N6-adenosine threonylcarbamoyltransferase, found in Pyrococcus furiosus (strain ATCC 43587 / DSM 3638 / JCM 8422 / Vc1).